The sequence spans 559 residues: Glucose-6-phosphate isomerase (559 aa).

Glu352 functions as the Proton donor in the catalytic mechanism. Active-site residues include His383 and Lys511.

The protein belongs to the GPI family.

It is found in the cytoplasm. The catalysed reaction is alpha-D-glucose 6-phosphate = beta-D-fructose 6-phosphate. It functions in the pathway carbohydrate biosynthesis; gluconeogenesis. Its pathway is carbohydrate degradation; glycolysis; D-glyceraldehyde 3-phosphate and glycerone phosphate from D-glucose: step 2/4. In terms of biological role, catalyzes the reversible isomerization of glucose-6-phosphate to fructose-6-phosphate. The chain is Glucose-6-phosphate isomerase from Chlorobaculum tepidum (strain ATCC 49652 / DSM 12025 / NBRC 103806 / TLS) (Chlorobium tepidum).